A 421-amino-acid polypeptide reads, in one-letter code: Histone-lysine N-methyltransferase SUV39H1 (421 aa).

In terms of domain architecture, Chromo spans 46-104 (FEVEYLWNYKKVQDQELYLVKWKYYPDSESTWEPRHHLKCNNLLKQFHLDLERELLRRA). The Pre-SET domain maps to 189–249 (AGCKCRDCFS…SCPNRVVQKG (61 aa)). Positions 191, 193, 196, 203, 204, 231, 235, 237, and 241 each coordinate Zn(2+). The SET domain occupies 252–375 (YKFCIFRTSD…TGEELTFDYN (124 aa)). S-adenosyl-L-methionine contacts are provided by residues 263 to 265 (RGW), Tyr-306, and 332 to 333 (NH). Residues Cys-335, Cys-409, Cys-411, and Cys-416 each contribute to the Zn(2+) site. In terms of domain architecture, Post-SET spans 405 to 421 (VRVECKCGVSSCRKYLF).

Belongs to the class V-like SAM-binding methyltransferase superfamily. Histone-lysine methyltransferase family. Suvar3-9 subfamily.

The protein resides in the nucleus. Its subcellular location is the chromosome. It localises to the centromere. It catalyses the reaction L-lysyl(9)-[histone H3] + 3 S-adenosyl-L-methionine = N(6),N(6),N(6)-trimethyl-L-lysyl(9)-[histone H3] + 3 S-adenosyl-L-homocysteine + 3 H(+). Its function is as follows. Histone methyltransferase that specifically trimethylates 'Lys-9' of histone H3 using monomethylated H3 'Lys-9' as substrate. H3 'Lys-9' trimethylation represents a specific tag for epigenetic transcriptional repression by recruiting HP1 (CBX1, CBX3 and/or CBX5) proteins to methylated histones. Mainly functions in heterochromatin regions, thereby playing a central role in the establishment of constitutive heterochromatin at pericentric and telomere regions. H3 'Lys-9' trimethylation is also required to direct DNA methylation at pericentric repeats. SUV39H1 is targeted to histone H3 via its interaction with RB1 and is involved in many processes. In Xenopus laevis (African clawed frog), this protein is Histone-lysine N-methyltransferase SUV39H1 (suv39h1).